The chain runs to 411 residues: Probable cysteine protease ATG4 (411 aa).

C135 (nucleophile) is an active-site residue. Catalysis depends on residues D310 and H312. The segment at L390–P411 is disordered.

The protein belongs to the peptidase C54 family.

It localises to the cytoplasm. The protein localises to the nucleus. It is found in the preautophagosomal structure. It catalyses the reaction [protein]-C-terminal L-amino acid-glycyl-phosphatidylethanolamide + H2O = [protein]-C-terminal L-amino acid-glycine + a 1,2-diacyl-sn-glycero-3-phosphoethanolamine. Cysteine protease that plays a key role in cytoplasm to vacuole transport (Cvt) and autophagy by mediating both proteolytic activation and delipidation of ATG8. Required for selective autophagic degradation of the nucleus (nucleophagy) as well as for mitophagy which contributes to regulate mitochondrial quantity and quality by eliminating the mitochondria to a basal level to fulfill cellular energy requirements and preventing excess ROS production. The protease activity is required for proteolytic activation of ATG8: cleaves the C-terminal amino acid of ATG8 to reveal a C-terminal glycine. ATG8 ubiquitin-like activity requires the exposure of the glycine at the C-terminus for its conjugation to phosphatidylethanolamine (PE) and its insertion to membranes, which is necessary for autophagy. The ATG8-PE conjugate mediates tethering between adjacent membranes and stimulates membrane hemifusion, leading to expansion of the autophagosomal membrane during autophagy. In addition to the protease activity, also catalyzes deconjugation of PE-conjugated forms of ATG8 during macroautophagy: ATG8 delipidation is required to release the protein from membranes, which facilitates multiple events during macroautophagy, and especially for efficient autophagosome biogenesis, the assembly of ATG9-containing tubulovesicular clusters into phagophores/autophagosomes, and for the disassembly of PAS-associated ATG components. ATG8 delipidation by ATG4 also recycles ATG8-PE generated on inappropriate membranes to maintain a reservoir of unlipidated ATG8 that is required for autophagosome formation at the PAS. This chain is Probable cysteine protease ATG4 (ATG4), found in Vanderwaltozyma polyspora (strain ATCC 22028 / DSM 70294 / BCRC 21397 / CBS 2163 / NBRC 10782 / NRRL Y-8283 / UCD 57-17) (Kluyveromyces polysporus).